The primary structure comprises 1322 residues: Sal-like protein 1 (1322 aa).

The interval 1–41 is disordered; it reads MSRRKQAKPQHFQSDPEVASLPRRDGDTEKGQPSRPTKSKD. The segment covering 22–41 has biased composition (basic and acidic residues); the sequence is PRRDGDTEKGQPSRPTKSKD. The C2H2-type 1; atypical zinc finger occupies 43 to 65; it reads HVCGRCCAEFFELSDLLLHKKSC. The interval 78–128 is disordered; it reads PASPAKTFPPGPSLNDPDDQMKDAANKADQEDCSDLSEPKGLDREESMEVE. Basic and acidic residues-rich tracts occupy residues 96–107 and 114–124; these read DQMKDAANKADQ and SEPKGLDREES. A Glycyl lysine isopeptide (Lys-Gly) (interchain with G-Cter in SUMO2) cross-link involves residue K440. C2H2-type zinc fingers lie at residues 450 to 472 and 478 to 500; these read HKCR…LRSH and FKCN…FQRH. A disordered region spans residues 578 to 659; the sequence is PIPISHSAAS…GGPGGTTFTN (82 aa). Polar residues predominate over residues 584 to 594; the sequence is SAASPQGSVKS. Residues S591, S594, and S596 each carry the phosphoserine modification. The segment covering 629–645 has biased composition (polar residues); it reads NMASSAVPTAGNSTLNS. Glycyl lysine isopeptide (Lys-Gly) (interchain with G-Cter in SUMO2) cross-links involve residues K672, K689, and K700. 3 C2H2-type zinc fingers span residues 705 to 727, 733 to 755, and 765 to 787; these read NECI…YRTH, FKCK…YSVH, and HSCP…IRMH. Disordered regions lie at residues 789–855 and 891–961; these read GGQI…SSPL and SMEG…GLSP. Residues 819 to 832 are compositionally biased toward acidic residues; that stretch reads DLDNFSDENMEECP. Low complexity predominate over residues 842 to 855; that stretch reads SADASQDSLSSSPL. The segment covering 898-935 has biased composition (polar residues); sequence TNDSSSVGGDMESQSAGSPAISESTSSMQALSPSNSTQ. The span at 936–948 shows a compositional bias: basic and acidic residues; that stretch reads EFHKSPGMEEKPQ. Phosphoserine is present on S940. Glycyl lysine isopeptide (Lys-Gly) (interchain with G-Cter in SUMO2) cross-links involve residues K946 and K981. 2 consecutive C2H2-type zinc fingers follow at residues 1000 to 1022 and 1028 to 1050; these read TACD…YRSH and FICT…MLTH. A Glycyl lysine isopeptide (Lys-Gly) (interchain with G-Cter in SUMO2) cross-link involves residue K1085. The segment at 1094 to 1119 is disordered; the sequence is VSPQDSKDAPTSHVPQGPLSSSATSP. 2 consecutive C2H2-type zinc fingers follow at residues 1133 to 1155 and 1161 to 1183; these read HYCN…ERTH and FACT…MGTH. Glycyl lysine isopeptide (Lys-Gly) (interchain with G-Cter in SUMO2) cross-links involve residues K1218, K1297, and K1317.

Belongs to the sal C2H2-type zinc-finger protein family. In terms of assembly, may associate with NuRD histone deacetylase complex (HDAC). Interacts with components of HDAC complex including HDAC1, HDAC2, RBBP4, RBPP7, MTA1 and MTA2. Interacts with CCNQ. Interacts with NSD2 (via PHD-type zinc fingers 1, 2 and 3). As to expression, expressed in the metanephric mesenchyme surrounding ureteric bud.

Its subcellular location is the nucleus. Functionally, transcriptional repressor involved in organogenesis. Plays an essential role in ureteric bud invasion during kidney development. This is Sal-like protein 1 (Sall1) from Mus musculus (Mouse).